The primary structure comprises 282 residues: Heme oxygenase 1, chloroplastic (282 aa).

Residues 1–56 constitute a chloroplast transit peptide; sequence MASATVVSQIQSLYIIKPRLSPPPPPHRQFRSIYFPTTRLLQQHRFRQMKSVVIVP. Residue H86 participates in heme b binding.

This sequence belongs to the heme oxygenase family. In terms of tissue distribution, highly expressed in root nodules and, to a lower extent, in leaves, shoots, roots, flowers and pods (at protein level).

It is found in the plastid. The protein resides in the chloroplast. It carries out the reaction heme b + 3 reduced [NADPH--hemoprotein reductase] + 3 O2 = biliverdin IXalpha + CO + Fe(2+) + 3 oxidized [NADPH--hemoprotein reductase] + 3 H2O + H(+). In terms of biological role, key enzyme in the synthesis of the chromophore of the phytochrome family of plant photoreceptors. Catalyzes the opening of the heme ring to form the open-chain tetrapyrrole biliverdin IX with the release of iron and carbon monoxide (CO). Produces specifically the biliverdin IX-alpha isomer. Can form complex with heme, is ferredoxin-dependent and its activity is increased in the presence of ascorbate. May affect the plastid-to-nucleus signaling pathway by perturbing tetrapyrrole synthesis. The plastid-to-nucleus signal plays an important role in the coordinated expression of both nuclear- and chloroplast-localized genes that encode photosynthesis-related proteins. Required for efficient symbiotic nitrogen fixation (SNF) in root nodules. Responsible for heme catabolism in uninfected nodule interstitial cells (UC), preventing superoxide production under stressful conditions (e.g. nitrate exposure and darkness) and catalyzing biliverdin (BV) production in senescing green nodules. The protein is Heme oxygenase 1, chloroplastic of Lotus japonicus (Lotus corniculatus var. japonicus).